Here is a 224-residue protein sequence, read N- to C-terminus: 7-cyano-7-deazaguanine synthase (224 aa).

Position 10–20 (10–20) interacts with ATP; that stretch reads LSGGLDSATVV. Cys189, Cys199, Cys202, and Cys205 together coordinate Zn(2+).

This sequence belongs to the QueC family. The cofactor is Zn(2+).

The enzyme catalyses 7-carboxy-7-deazaguanine + NH4(+) + ATP = 7-cyano-7-deazaguanine + ADP + phosphate + H2O + H(+). It functions in the pathway purine metabolism; 7-cyano-7-deazaguanine biosynthesis. Functionally, catalyzes the ATP-dependent conversion of 7-carboxy-7-deazaguanine (CDG) to 7-cyano-7-deazaguanine (preQ(0)). This Pseudomonas aeruginosa (strain LESB58) protein is 7-cyano-7-deazaguanine synthase.